Consider the following 372-residue polypeptide: Silphinene synthase peniA (372 aa).

Residues aspartate 116, glutamate 121, asparagine 263, serine 267, and glutamate 271 each contribute to the Mg(2+) site. The DDXXE motif signature appears at aspartate 116–glutamate 121.

It belongs to the terpene synthase family. It depends on Mg(2+) as a cofactor.

It carries out the reaction (2E,6E)-farnesyl diphosphate = silphinene + diphosphate. It participates in secondary metabolite biosynthesis; terpenoid biosynthesis. Sesquiterpene cyclase; part of the gene cluster that mediates the biosynthesis of penifulvin A, a potent insecticidal sesquiterpene that features a [5.5.5.6]dioxafenestrane ring. Within the pathway, peniA catalyzes the first step and generates the angular triquinane scaffold silphinene via cyclization of the linear farnesyl pyrophosphate (FPP). The cytochrome P450 monooxygenase peniB and the flavin-dependent monooxygenase peniC then catalyze a series of oxidation reactions to transform silphinene into penifulvin A. This chain is Silphinene synthase peniA, found in Penicillium patulum (Penicillium griseofulvum).